A 228-amino-acid polypeptide reads, in one-letter code: Cytidylate kinase (228 aa).

Position 17-25 (17-25 (GPTASGKGT)) interacts with ATP.

Belongs to the cytidylate kinase family. Type 1 subfamily.

The protein localises to the cytoplasm. The catalysed reaction is CMP + ATP = CDP + ADP. It carries out the reaction dCMP + ATP = dCDP + ADP. The protein is Cytidylate kinase of Burkholderia mallei (strain NCTC 10247).